The chain runs to 73 residues: Aldehyde dehydrogenase (73 aa).

The protein belongs to the aldehyde dehydrogenase family.

The enzyme catalyses an aldehyde + NAD(+) + H2O = a carboxylate + NADH + 2 H(+). It participates in alcohol metabolism; ethanol degradation; acetate from ethanol: step 2/2. This Geobacillus stearothermophilus (Bacillus stearothermophilus) protein is Aldehyde dehydrogenase.